A 101-amino-acid chain; its full sequence is Small ribosomal subunit protein uS14 (101 aa).

It belongs to the universal ribosomal protein uS14 family. As to quaternary structure, part of the 30S ribosomal subunit. Contacts proteins S3 and S10.

Its function is as follows. Binds 16S rRNA, required for the assembly of 30S particles and may also be responsible for determining the conformation of the 16S rRNA at the A site. The chain is Small ribosomal subunit protein uS14 from Synechococcus sp. (strain JA-2-3B'a(2-13)) (Cyanobacteria bacterium Yellowstone B-Prime).